Here is a 166-residue protein sequence, read N- to C-terminus: Large ribosomal subunit protein uL10 (166 aa).

It belongs to the universal ribosomal protein uL10 family. In terms of assembly, part of the ribosomal stalk of the 50S ribosomal subunit. The N-terminus interacts with L11 and the large rRNA to form the base of the stalk. The C-terminus forms an elongated spine to which L12 dimers bind in a sequential fashion forming a multimeric L10(L12)X complex.

Forms part of the ribosomal stalk, playing a central role in the interaction of the ribosome with GTP-bound translation factors. The polypeptide is Large ribosomal subunit protein uL10 (Pseudomonas putida (strain GB-1)).